A 214-amino-acid polypeptide reads, in one-letter code: Urease accessory protein UreG 2 (214 aa).

22 to 29 contributes to the GTP binding site; it reads GPVGSGKT.

This sequence belongs to the SIMIBI class G3E GTPase family. UreG subfamily. As to quaternary structure, homodimer. UreD, UreF and UreG form a complex that acts as a GTP-hydrolysis-dependent molecular chaperone, activating the urease apoprotein by helping to assemble the nickel containing metallocenter of UreC. The UreE protein probably delivers the nickel.

The protein localises to the cytoplasm. In terms of biological role, facilitates the functional incorporation of the urease nickel metallocenter. This process requires GTP hydrolysis, probably effectuated by UreG. In Bradyrhizobium sp. (strain BTAi1 / ATCC BAA-1182), this protein is Urease accessory protein UreG 2.